Reading from the N-terminus, the 410-residue chain is MEAYIRQKRATPGMVQASDMQLVRPMSAVNRNGREVHAYDGPMQFMMSPNNPDQILTSTGNASVTTTPTSPYSDAPLEKLTPSSQDSEDEESTPVDILPSSNSFDSTRHSADHLLTHSAPISPALMNNNGGSHHDSSSGKSVEHSSPQASGHNDTEGDVVGPIEQWVTQPAPQGVLYKCRITRDRKGMDRGLFPIYYLHLERDYGKKVFCLAGRKRKKSKTSNYIISCDPTDLSRQADGFVGKLRSNVFGTTFFVYDSGKKEDHGNPRLDLAVVIYDTNILGFKGPRNMTVLLPGMTEDDQRVKISSADSQQGLLDSWKSKNMDNVVELHNKTPIWNDETQSYVLNFHGRVTQASVKNFQLVHDSDPDYIVMQFGRTSDDIFTMDFRYPLCAFQAFAIALSSFDGKLACE.

Disordered regions lie at residues 44–109 (QFMM…STRH) and 121–159 (ISPA…EGDV). A compositionally biased stretch (polar residues) spans 47–72 (MSPNNPDQILTSTGNASVTTTPTSPY). The segment covering 132–143 (SHHDSSSGKSVE) has biased composition (basic and acidic residues).

The protein belongs to the TUB family.

It is found in the cytoplasm. It localises to the nucleus. In Aedes aegypti (Yellowfever mosquito), this protein is Protein king tubby 1 (king-tubby1).